The primary structure comprises 105 residues: uncharacterized protein (105 aa).

This is an uncharacterized protein from Escherichia coli (Bacteriophage T4).